Consider the following 105-residue polypeptide: Small ribosomal subunit protein uS10 (105 aa).

The protein belongs to the universal ribosomal protein uS10 family. As to quaternary structure, part of the 30S ribosomal subunit.

In terms of biological role, involved in the binding of tRNA to the ribosomes. In Roseobacter denitrificans (strain ATCC 33942 / OCh 114) (Erythrobacter sp. (strain OCh 114)), this protein is Small ribosomal subunit protein uS10.